Reading from the N-terminus, the 103-residue chain is Large ribosomal subunit protein bL21 (103 aa).

It belongs to the bacterial ribosomal protein bL21 family. In terms of assembly, part of the 50S ribosomal subunit. Contacts protein L20.

Functionally, this protein binds to 23S rRNA in the presence of protein L20. The polypeptide is Large ribosomal subunit protein bL21 (Pseudomonas syringae pv. syringae (strain B728a)).